An 806-amino-acid chain; its full sequence is Protein bimA (806 aa).

TPR repeat units follow at residues 76 to 109 (LGCSYVYAQACLDLGKYTDGINALERSKGQWTSR) and 127 to 160 (AAVLCLQGKLWQAHKEHNKAVECYAAALKLNPFM). 3 disordered regions span residues 202-348 (VLPP…HRLG), 353-372 (TVSGQVAHPSVPHSTDQGVG), and 401-460 (REVK…ASSK). Positions 224–237 (AGTTRSDSTSTHGS) are enriched in polar residues. Positions 246 to 257 (GSTVSVASSGTG) are enriched in low complexity. The interval 260 to 399 (LPREGMETPG…ISSTALGVKE (140 aa)) is bimA domain. A compositionally biased stretch (basic and acidic residues) spans 328–348 (TKFESDEGHTERDAGMGHRLG). Residues 408-421 (TTGNKARTTTSSNV) are compositionally biased toward polar residues. Residues 432–445 (HAGEIHDGDSKEYR) are compositionally biased toward basic and acidic residues. Low complexity predominate over residues 446 to 459 (GTSSTSNGSQNASS). TPR repeat units follow at residues 513-546 (PWVLAQIGRAYYEQAMYTEAEKYFVRVKAMAPSR), 581-614 (PEAWCAVGNSFSHQRDHDQALKCFKRATQLDPHF), 616-648 (YGFTLQGHEYVANEEYDKALDAYRSGINADSRH), 649-682 (YNAWYGLGTVYDKMGKLDFAEQHFRNAAKINPSN), 684-716 (VLICCIGLVLEKMNNPKSALIQYNRACTLAPHS), and 751-784 (ANVHYLLGKLYKMLRDKGNAIKHFTTALNLDPKA).

The protein belongs to the APC3/CDC27 family.

The protein localises to the nucleus. In terms of biological role, required for the completion of mitosis in Aspergillus nidulans. The protein is Protein bimA (bimA) of Emericella nidulans (strain FGSC A4 / ATCC 38163 / CBS 112.46 / NRRL 194 / M139) (Aspergillus nidulans).